The sequence spans 427 residues: Glutamate-1-semialdehyde 2,1-aminomutase 2 (427 aa).

Lysine 267 carries the post-translational modification N6-(pyridoxal phosphate)lysine.

Belongs to the class-III pyridoxal-phosphate-dependent aminotransferase family. HemL subfamily. Homodimer. Requires pyridoxal 5'-phosphate as cofactor.

The protein resides in the cytoplasm. The catalysed reaction is (S)-4-amino-5-oxopentanoate = 5-aminolevulinate. Its pathway is porphyrin-containing compound metabolism; protoporphyrin-IX biosynthesis; 5-aminolevulinate from L-glutamyl-tRNA(Glu): step 2/2. This chain is Glutamate-1-semialdehyde 2,1-aminomutase 2, found in Staphylococcus haemolyticus (strain JCSC1435).